The primary structure comprises 496 residues: MSETGCRHYQSYVKEHSYDTFRVIDAYFAACVNRDARERKAIHCNCFECGSYGIQLYACLHCIYFGCRGAHITSHLRSKKHNVALELSHGTLYCYACRDFIYDARSREYALINRKLEAKDLQKSIGWVPWVPTTKETNLLLANARRRLVRPNQTIGLRGLLNLGATCFMNCIVQALVHTPLLSDYFMSDRHDCGSKSSHKCLVCEVSRLFQEFYSGSRSPLSLHRLLHLIWNHAKHLAGYEQQDAHEFFIATLDVLHRHCVKAKAEHESKSNSSGSGSGTNSSNSSSSHCYGQCNCIIDQIFTGMLQSDVVCQACNGVSTTYDPFWDISLDLGETTTHGGVTPKTLIDCLERYTRAEHLGSAAKIKCSTCKSYQESTKQFSLRTLPSVVSFHLKRFEHSALIDRKISSFIQFPVEFDMTPFMSEKKNAYGDFRFSLYAVVNHVGTIDTGHYTAYVRHQKDTWVKCDDHVITMASLKQVLDSEGYLLFYHKNVLEYE.

Residues 4-120 (TGCRHYQSYV…LINRKLEAKD (117 aa)) form a UBP-type zinc finger. The Zn(2+) site is built by C6, H8, C46, C49, C59, C62, C67, H71, H75, H81, C94, and C97. One can recognise a USP domain in the interval 158 to 491 (RGLLNLGATC…EGYLLFYHKN (334 aa)). The active-site Nucleophile is the C167. The Proton acceptor role is filled by H450.

Belongs to the peptidase C19 family. UBP8 subfamily. In terms of assembly, component of the SAGA transcription coactivator-HAT complex, at least composed of Ada2b, not/nonstop, Pcaf/Gcn5, Sgf11 and Spt3. Expressed in the optic lobe and central brain. Highly expressed in the lamina precursor cells but not in differentiated lamina neurons. Also expressed in marginal, epithelial and medulla glial cells adjacent to the lamina plexus.

The protein resides in the nucleus. The catalysed reaction is Thiol-dependent hydrolysis of ester, thioester, amide, peptide and isopeptide bonds formed by the C-terminal Gly of ubiquitin (a 76-residue protein attached to proteins as an intracellular targeting signal).. In terms of biological role, histone deubiquitinating component of the transcription regulatory histone acetylation (HAT) complex SAGA. Catalyzes the deubiquitination of histone H2B, thereby acting as a coactivator in a large subset of genes. Required to counteract heterochromatin silencing. Controls the development of neuronal connectivity in visual system by being required for accurate axon targeting in the optic lobe. Required for expression of ecdysone-induced genes such as br/broad. The protein is Ubiquitin carboxyl-terminal hydrolase nonstop (not) of Drosophila melanogaster (Fruit fly).